The primary structure comprises 201 residues: Holliday junction resolvase RecU (201 aa).

Positions 87, 89, 102, and 121 each coordinate Mg(2+).

This sequence belongs to the RecU family. It depends on Mg(2+) as a cofactor.

The protein resides in the cytoplasm. The catalysed reaction is Endonucleolytic cleavage at a junction such as a reciprocal single-stranded crossover between two homologous DNA duplexes (Holliday junction).. Functionally, endonuclease that resolves Holliday junction intermediates in genetic recombination. Cleaves mobile four-strand junctions by introducing symmetrical nicks in paired strands. Promotes annealing of linear ssDNA with homologous dsDNA. Required for DNA repair, homologous recombination and chromosome segregation. In Listeria welshimeri serovar 6b (strain ATCC 35897 / DSM 20650 / CCUG 15529 / CIP 8149 / NCTC 11857 / SLCC 5334 / V8), this protein is Holliday junction resolvase RecU.